Here is a 413-residue protein sequence, read N- to C-terminus: Ribulose bisphosphate carboxylase large chain (413 aa).

Residues asparagine 100 and threonine 150 each coordinate substrate. The active-site Proton acceptor is the lysine 152. Lysine 154 is a substrate binding site. Mg(2+) contacts are provided by lysine 178, aspartate 180, and glutamate 181. Lysine 178 bears the N6-carboxylysine mark. The Proton acceptor role is filled by histidine 271. 3 residues coordinate substrate: arginine 272, histidine 304, and serine 356.

The protein belongs to the RuBisCO large chain family. Type I subfamily. Heterohexadecamer of 8 large chains and 8 small chains; disulfide-linked. The disulfide link is formed within the large subunit homodimers. Requires Mg(2+) as cofactor. The disulfide bond which can form in the large chain dimeric partners within the hexadecamer appears to be associated with oxidative stress and protein turnover.

Its subcellular location is the plastid. The protein resides in the chloroplast. It catalyses the reaction 2 (2R)-3-phosphoglycerate + 2 H(+) = D-ribulose 1,5-bisphosphate + CO2 + H2O. The catalysed reaction is D-ribulose 1,5-bisphosphate + O2 = 2-phosphoglycolate + (2R)-3-phosphoglycerate + 2 H(+). RuBisCO catalyzes two reactions: the carboxylation of D-ribulose 1,5-bisphosphate, the primary event in carbon dioxide fixation, as well as the oxidative fragmentation of the pentose substrate in the photorespiration process. Both reactions occur simultaneously and in competition at the same active site. This chain is Ribulose bisphosphate carboxylase large chain (rbcL), found in Adiantum pedatum (Northern maidenhair fern).